Here is a 138-residue protein sequence, read N- to C-terminus: Large ribosomal subunit protein bL19 (138 aa).

The protein belongs to the bacterial ribosomal protein bL19 family.

This protein is located at the 30S-50S ribosomal subunit interface and may play a role in the structure and function of the aminoacyl-tRNA binding site. In Rickettsia africae (strain ESF-5), this protein is Large ribosomal subunit protein bL19.